The following is a 263-amino-acid chain: Heat-labile enterotoxin IIB, A chain (263 aa).

Positions 1-20 are cleaved as a signal peptide; the sequence is MAKVISFFISLFLISFPLYA. NAD(+) is bound at residue 26 to 39; that stretch reads ADSRTPDEVRRSGG. Glu-130 is a catalytic residue. Residues Cys-205 and Cys-217 are joined by a disulfide bond.

Belongs to the enterotoxin A family. As to quaternary structure, heterohexamer of one A chain and of five B chains.

In terms of biological role, the biological activity of the toxin is produced by the A chain, which activates intracellular adenyl cyclase. In Escherichia coli, this protein is Heat-labile enterotoxin IIB, A chain.